Reading from the N-terminus, the 260-residue chain is Tryptophan synthase alpha chain (260 aa).

Active-site proton acceptor residues include E52 and D63.

This sequence belongs to the TrpA family. In terms of assembly, tetramer of two alpha and two beta chains.

It catalyses the reaction (1S,2R)-1-C-(indol-3-yl)glycerol 3-phosphate + L-serine = D-glyceraldehyde 3-phosphate + L-tryptophan + H2O. It functions in the pathway amino-acid biosynthesis; L-tryptophan biosynthesis; L-tryptophan from chorismate: step 5/5. Functionally, the alpha subunit is responsible for the aldol cleavage of indoleglycerol phosphate to indole and glyceraldehyde 3-phosphate. The sequence is that of Tryptophan synthase alpha chain from Streptococcus thermophilus (strain ATCC BAA-491 / LMD-9).